A 245-amino-acid chain; its full sequence is Tetraspanin-16 (245 aa).

Topologically, residues 1-13 (MAEIHTPYSSLKK) are cytoplasmic. A helical transmembrane segment spans residues 14 to 34 (LLSLLNGFVAVSGIILVGLGI). Residues 35–37 (GGK) lie on the Extracellular side of the membrane. Residues 38-58 (CGGASLTNVLGLSSAYLLHVG) form a helical membrane-spanning segment. A topological domain (cytoplasmic) is located at residue Asn59. The helical transmembrane segment at 60-80 (LCLVMGCITVLLGCAGWYGAT) threads the bilayer. The Extracellular portion of the chain corresponds to 81 to 94 (KESRGTLLFCILSM). The chain crosses the membrane as a helical span at residues 95–115 (VIVLIMEVTAATVVLLFFPIV). Residues 116-245 (GDVALEHTFV…VAQAGLELLA (130 aa)) are Cytoplasmic-facing.

The protein belongs to the tetraspanin (TM4SF) family. In terms of tissue distribution, broadly expressed in most human tissues and cell lines including neural and bone marrow derived tissues.

The protein resides in the membrane. This is Tetraspanin-16 (TSPAN16) from Homo sapiens (Human).